Here is a 144-residue protein sequence, read N- to C-terminus: Transcription antitermination protein NusB (144 aa).

This sequence belongs to the NusB family.

Functionally, involved in transcription antitermination. Required for transcription of ribosomal RNA (rRNA) genes. Binds specifically to the boxA antiterminator sequence of the ribosomal RNA (rrn) operons. The chain is Transcription antitermination protein NusB from Histophilus somni (strain 2336) (Haemophilus somnus).